Consider the following 1063-residue polypeptide: Presequence protease, mitochondrial (1063 aa).

The transit peptide at 1–33 directs the protein to the mitochondrion; the sequence is MLRLANRVSRKDSGNLGIAQLKKRLLATSGVSQ. Histidine 105 contributes to the Zn(2+) binding site. Glutamate 108 acts as the Proton acceptor in catalysis. Residue histidine 109 participates in Zn(2+) binding. The active site involves glutamate 181. Glutamate 206 is a Zn(2+) binding site.

Belongs to the peptidase M16 family. PreP subfamily. In terms of assembly, monomer and homodimer; homodimerization is induced by binding of the substrate. Requires Zn(2+) as cofactor.

The protein resides in the mitochondrion intermembrane space. The protein localises to the mitochondrion matrix. Degrades mitochondrial transit peptides after their cleavage in the intermembrane space or in the matrix, and presequence peptides; clearance of these peptides is required to keep the presequence processing machinery running. Preferentially cleaves the N-terminal side of paired basic amino acid residues. Also degrades other unstructured peptides. May function as an ATP-dependent peptidase as opposed to a metalloendopeptidase. In Debaryomyces hansenii (strain ATCC 36239 / CBS 767 / BCRC 21394 / JCM 1990 / NBRC 0083 / IGC 2968) (Yeast), this protein is Presequence protease, mitochondrial (CYM1).